We begin with the raw amino-acid sequence, 295 residues long: uncharacterized protein (295 aa).

Positions 4 to 233 (IVVKSMAMEK…LQNTIERLVL (230 aa)) constitute a Sigma-54 factor interaction domain.

This is an uncharacterized protein from Pseudomonas sp. (strain NS671).